A 317-amino-acid polypeptide reads, in one-letter code: RHOMBOID-like protein 2 (317 aa).

A run of 7 helical transmembrane segments spans residues 33–53 (SWLI…VMFV), 118–138 (WLHA…FIGI), 149–169 (VGLI…LFLQ), 172–192 (ISVG…SELL), 202–222 (AAAL…GMLP), 224–244 (VDNF…FVLL), and 272–292 (LFVV…VMLF). The active-site Nucleophile is Ser-177. His-229 functions as the Charge relay system in the catalytic mechanism.

Belongs to the peptidase S54 family. In terms of tissue distribution, expressed in roots, seedlings, leaves, stems and flowers.

It is found in the golgi apparatus membrane. The enzyme catalyses Cleaves type-1 transmembrane domains using a catalytic dyad composed of serine and histidine that are contributed by different transmembrane domains.. Its function is as follows. Rhomboid-type serine protease that catalyzes intramembrane proteolysis. Can cleave the Drosophila proteins Spitz and Keren. May function in pollen elongation. The sequence is that of RHOMBOID-like protein 2 from Arabidopsis thaliana (Mouse-ear cress).